A 490-amino-acid polypeptide reads, in one-letter code: MSDRGRTLMVQGTTSDAGKSTLVTALCRWLARRGVAVVPFKPQNMALNSAVTADGGEIGRAQAVQAQACRLAPHTDMNPVLLKPNTDIGAQVIIHGRAVTSMDAAAYHDYKRVAMEAVLASHGRLAAAYRVVMVEGAGSPAEINLRANDIANMGFAEAVDCPVILVADIDRGGVFAHLVGTLELLSDSERERVRGFVINRFRGDIALLQPGLDWLEARTGKPVLGVLPYVSDLHLEAEDAIDTRQAAKVGPRLKVVVPVLPRISNHTDFDPLRLHPQVELSFVGPGQALPSADLIVLPGSKSVRADLAALRERGWDEAILRHLRYGGRLLGICGGLQMLGERLHDPLGLEGAAGSSAGLGLLALETTLEADKQLRNVQGRLSLEDAPLSGYEIHAGVTRGEALARPAVVLDDGRADGARSVDGNVMGTYLHGLFESTAACSALLRWAGLREVQAVDYQALRERDIERLADLVERHLDTGRLLALCGEPHA.

The 188-residue stretch at arginine 252 to alanine 439 folds into the GATase cobBQ-type domain. Residue cysteine 333 is the Nucleophile of the active site. The active site involves histidine 431.

Belongs to the CobB/CobQ family. CobQ subfamily.

It participates in cofactor biosynthesis; adenosylcobalamin biosynthesis. Functionally, catalyzes amidations at positions B, D, E, and G on adenosylcobyrinic A,C-diamide. NH(2) groups are provided by glutamine, and one molecule of ATP is hydrogenolyzed for each amidation. This is Cobyric acid synthase from Pseudomonas aeruginosa (strain LESB58).